The chain runs to 260 residues: Flap endonuclease Xni (260 aa).

Aspartate 109 contributes to the Mg(2+) binding site. A 5'-3' exonuclease domain is found at valine 165–alanine 259. 4 residues coordinate K(+): leucine 176, proline 185, valine 187, and valine 190. The tract at residues glycine 189–alanine 194 is interaction with DNA.

The protein belongs to the Xni family. The cofactor is Mg(2+). K(+) is required as a cofactor.

Has flap endonuclease activity. During DNA replication, flap endonucleases cleave the 5'-overhanging flap structure that is generated by displacement synthesis when DNA polymerase encounters the 5'-end of a downstream Okazaki fragment. In Vibrio campbellii (strain ATCC BAA-1116), this protein is Flap endonuclease Xni.